The chain runs to 334 residues: Phosphate acyltransferase (334 aa).

It belongs to the PlsX family. As to quaternary structure, homodimer. Probably interacts with PlsY.

The protein resides in the cytoplasm. It catalyses the reaction a fatty acyl-[ACP] + phosphate = an acyl phosphate + holo-[ACP]. It functions in the pathway lipid metabolism; phospholipid metabolism. Its function is as follows. Catalyzes the reversible formation of acyl-phosphate (acyl-PO(4)) from acyl-[acyl-carrier-protein] (acyl-ACP). This enzyme utilizes acyl-ACP as fatty acyl donor, but not acyl-CoA. The chain is Phosphate acyltransferase from Thermotoga petrophila (strain ATCC BAA-488 / DSM 13995 / JCM 10881 / RKU-1).